A 355-amino-acid chain; its full sequence is Polyferredoxin protein FwdF (355 aa).

4Fe-4S ferredoxin-type domains are found at residues 24–53, 64–93, 108–137, 147–176, 187–216, 235–264, 267–296, and 304–333; these read RELC…MGPL, PKLD…LKIN, RDIK…VERE, GEIN…LKYN, TDIE…VICY, GKTV…VEKP, GELI…FPKP, and PRII…VKRT. [4Fe-4S] cluster-binding residues include Cys33, Cys36, Cys39, Cys43, Cys73, Cys76, Cys79, Cys83, Cys117, Cys120, Cys123, Cys127, Cys156, Cys159, Cys162, Cys166, Cys196, Cys199, Cys202, Cys206, Cys244, Cys247, Cys250, Cys254, Cys276, Cys279, Cys282, Cys286, Cys313, Cys316, Cys319, and Cys323.

The cofactor is [4Fe-4S] cluster.

The protein is Polyferredoxin protein FwdF (fwdF) of Methanocaldococcus jannaschii (strain ATCC 43067 / DSM 2661 / JAL-1 / JCM 10045 / NBRC 100440) (Methanococcus jannaschii).